We begin with the raw amino-acid sequence, 621 residues long: KIF-binding protein (621 aa).

The segment at 51-75 (GPAPEDEDERPEAEDGPGAGDHALG) is disordered. Residues 54–65 (PEDEDERPEAED) are compositionally biased toward acidic residues. Serine 178 is subject to Phosphoserine.

Belongs to the KIF-binding protein family. As to quaternary structure, interacts with KIF1B; positively regulates KIF1B microtubule motor activity. Interacts with STMN2. Highly expressed in heart, brain, ovary, testis, spinal cord and all specific brain regions examined. Moderate expressed at intermediate level in all other adult tissues examined, as well as in fetal liver and brain. Not expressed in blood leukocytes.

The protein resides in the cytoplasm. Its subcellular location is the cytoskeleton. Activator of KIF1B plus-end-directed microtubule motor activity. Required for organization of axonal microtubules, and axonal outgrowth and maintenance during peripheral and central nervous system development. This is KIF-binding protein from Homo sapiens (Human).